The chain runs to 885 residues: DNA mismatch repair protein MutS (885 aa).

Position 626 to 633 (626 to 633 (GPNMGGKS)) interacts with ATP.

The protein belongs to the DNA mismatch repair MutS family.

In terms of biological role, this protein is involved in the repair of mismatches in DNA. It is possible that it carries out the mismatch recognition step. This protein has a weak ATPase activity. This chain is DNA mismatch repair protein MutS, found in Burkholderia cenocepacia (strain ATCC BAA-245 / DSM 16553 / LMG 16656 / NCTC 13227 / J2315 / CF5610) (Burkholderia cepacia (strain J2315)).